A 392-amino-acid chain; its full sequence is MFQIGEALMGQGSELAHVDLMIGDKGGPVGQAFANGLTQLSAGHTPLLSVIRPNLPPKPSTLIIPKVTVKNMDQAAKIFGPAQSAVAKAVADSVEEGVIPKDQVEDLVVVASVFIHPEAQDYNKIYRYNYGATKLAIKRALEGFPDINKVLEESNKSTHAIMGFKVTRLWDPPYLQVAFDNPNLEFVLSAISQIPNSDHVIIEAGTPLIKRYGVDVISKIRQVRPDAFIVADLKTLDTGNLEARMVADAAGDAIVVSALAPISTIDKLIEEAHKTGIYAVMDTLNQHDPISVLKQLKVMPDVIELHRGIDIEGTEHAWGNIGEIKKIAPKALIAVAGGVRLDKVPVALGQGADILVVGRAITNAKDVREVAEQFINALNKPEIDQFRVMTDF.

Positions 1–161 are formaldehyde-activating enzyme; the sequence is MFQIGEALMG…EESNKSTHAI (161 aa). His-17 (proton donor) is an active-site residue. Residues Asp-19, Leu-48, Lys-66, Thr-68, and Gln-83 each coordinate substrate. The tract at residues 162-392 is 3-hexulose-6-phosphate synthase; the sequence is MGFKVTRLWD…IDQFRVMTDF (231 aa).

This sequence in the N-terminal section; belongs to the formaldehyde-activating enzyme family. The protein in the C-terminal section; belongs to the HPS/KGPDC family. HPS subfamily.

The catalysed reaction is 5,6,7,8-tetrahydromethanopterin + formaldehyde = 5,10-methylenetetrahydromethanopterin + H2O. It catalyses the reaction D-ribulose 5-phosphate + formaldehyde = D-arabino-hex-3-ulose 6-phosphate. It functions in the pathway carbohydrate biosynthesis; D-ribose 5-phosphate biosynthesis. Catalyzes the condensation of formaldehyde with tetrahydromethanopterin (H(4)MPT) to 5,10-methylenetetrahydromethanopterin. In terms of biological role, catalyzes the reversible formation of ribulose-5-phosphate and formaldehyde from 3-hexulose-6-phosphate. This is Bifunctional enzyme Fae/Hps from Methanosarcina acetivorans (strain ATCC 35395 / DSM 2834 / JCM 12185 / C2A).